The sequence spans 303 residues: Serine/threonine-protein phosphatase PP-X homolog 2 (303 aa).

Residues aspartate 51, histidine 53, aspartate 79, and asparagine 111 each coordinate Mn(2+). The Proton donor role is filled by histidine 112. Histidine 161 and histidine 235 together coordinate Mn(2+).

Belongs to the PPP phosphatase family. PP-4 (PP-X) subfamily. Requires Mn(2+) as cofactor.

The enzyme catalyses O-phospho-L-seryl-[protein] + H2O = L-seryl-[protein] + phosphate. The catalysed reaction is O-phospho-L-threonyl-[protein] + H2O = L-threonyl-[protein] + phosphate. In Paramecium tetraurelia, this protein is Serine/threonine-protein phosphatase PP-X homolog 2 (Ppx2).